We begin with the raw amino-acid sequence, 149 residues long: Putative pre-16S rRNA nuclease (149 aa).

It belongs to the YqgF nuclease family.

Its subcellular location is the cytoplasm. Functionally, could be a nuclease involved in processing of the 5'-end of pre-16S rRNA. This Pseudoalteromonas translucida (strain TAC 125) protein is Putative pre-16S rRNA nuclease.